The following is a 530-amino-acid chain: Developmental and secondary metabolism regulator VEL1 (530 aa).

The 195-residue stretch at 26–220 (NRSLWYQMTV…ADQGCQVRIR (195 aa)) folds into the Velvet domain. The short motif at 40–45 (ERARAC) is the Nuclear localization signal element. Residues 206–516 (LSKTVADQGC…HDQGWYSRAD (311 aa)) form a disordered region. Over residues 244–253 (FERREEDFGR) the composition is skewed to basic and acidic residues. Residues 295–305 (YPPPPPPPSYE) are compositionally biased toward pro residues. The segment covering 347–356 (YAPTAQSPYS) has biased composition (polar residues). Residues 380–389 (VKHDLYDRRQ) are compositionally biased toward basic and acidic residues. Positions 390-404 (STSSYVPPSPSVYST) are enriched in low complexity. Residues 415-426 (SYPPTPVAAPRP) show a composition bias toward pro residues. Positions 429 to 460 (MHSQTSLPALKIDQLVSPVSPLPPIEPQTGPA) are PEST. The span at 478–490 (FAQSTRPLHNGQR) shows a compositional bias: polar residues.

This sequence belongs to the velvet family. VeA subfamily. Component of the heterotrimeric velvet complex composed of LAE1, VEL1 and VEL2; VEL1 acting as a bridging protein between LAE1 and VEL2. Interacts with LAE1.

Its subcellular location is the nucleus. It localises to the cytoplasm. Functionally, component of the velvet transcription factor complex that controls sexual/asexual developmental ratio in response to light, promoting sexual development in the darkness while stimulating asexual sporulation under illumination. The velvet complex hat acts as a global regulator for secondary metabolite gene expression. Controls positively the expression of the gibberellins, fumonisins and fusarin C gene clusters. Controls the expression of the fusaric acid gene cluster. Controls negatively the expression of the bikaverin gene cluster. Regulates the expression of laeA. Plays a crucial role in virulence. In Gibberella fujikuroi (strain CBS 195.34 / IMI 58289 / NRRL A-6831) (Bakanae and foot rot disease fungus), this protein is Developmental and secondary metabolism regulator VEL1.